The sequence spans 617 residues: D-glucuronyl C5-epimerase (617 aa).

Residues 1-11 lie on the Cytoplasmic side of the membrane; that stretch reads MRCLAARVNYK. The helical; Signal-anchor for type II membrane protein transmembrane segment at 12-28 threads the bilayer; sequence TLIIICALFTLVTVLLW. Over 29–617 the chain is Lumenal; sequence NKCSSDKAIQ…YLKGSRAKHN (589 aa). Substrate contacts are provided by residues Y179, 184–186, Q201, Y209, Q212, and Q215; that span reads RDR. Positions 237, 239, 268, 269, and 392 each coordinate Ca(2+). Residues 429-432, 499-500, N510, Y514, Y560, R563, and 572-581 each bind substrate; these read KLGE, EY, and NLARWDYHTT.

Belongs to the D-glucuronyl C5-epimerase family. Homodimer. Interacts with HS2ST1.

The protein resides in the golgi apparatus membrane. The catalysed reaction is [heparosan-N-sulfate](n) = [heparan-N-sulfate](n). The protein operates within glycan metabolism; heparan sulfate biosynthesis. Its pathway is glycan metabolism; heparin biosynthesis. Functionally, converts D-glucuronic acid residues adjacent to N-sulfate sugar residues to L-iduronic acid residues, both in maturing heparan sulfate (HS) and heparin chains. This is important for further modifications that determine the specificity of interactions between these glycosaminoglycans and proteins. The chain is D-glucuronyl C5-epimerase (GLCE) from Bos taurus (Bovine).